The sequence spans 185 residues: MSPSLQEGAQLGESKPSTCSFSIERILGLDQKKDCVPLMKPHRPWADTCSSSGKDGNLCLHVPNPPSGISFPSVVDHPMPEERASKYENYFSASERLSLKRELSWYRGRRPRTAFTQNQIEVLENVFRVNCYPGIDIREDLAQKLNLEEDRIQIWFQNRRAKLKRSHRESQFLMAKKNFNTNLLE.

Positions G108–H167 form a DNA-binding region, homeobox.

This sequence belongs to the ANF homeobox family. Can form heterodimers with PROP1 in binding to DNA. Interacts with TLE1.

It is found in the nucleus. Functionally, required for the normal development of the forebrain, eyes and other anterior structures such as the olfactory placodes and pituitary gland. Possible transcriptional repressor. Binds to the palindromic PIII sequence, 5'-AGCTTGAGTCTAATTGAATTAACTGTAC-3'. HESX1 and PROP1 bind as heterodimers on this palindromic site, and, in vitro, HESX1 can antagonize PROP1 activation. The protein is Homeobox expressed in ES cells 1 (HESX1) of Pan paniscus (Pygmy chimpanzee).